The primary structure comprises 419 residues: DNA primase DnaG (419 aa).

The region spanning 174–260 (DAIIVVEGRS…EVEDLEKDEV (87 aa)) is the Toprim domain. Positions 180, 222, and 224 each coordinate Mg(2+). The disordered stretch occupies residues 277–314 (HNILSESDSKNSHKKHNGKHNNKHSNNKHQQHETKVKE). Residues 288-305 (SHKKHNGKHNNKHSNNKH) show a composition bias toward basic residues.

Belongs to the archaeal DnaG primase family. Forms a ternary complex with MCM helicase and DNA. Component of the archaeal exosome complex. It depends on Mg(2+) as a cofactor.

The enzyme catalyses ssDNA + n NTP = ssDNA/pppN(pN)n-1 hybrid + (n-1) diphosphate.. Its function is as follows. RNA polymerase that catalyzes the synthesis of short RNA molecules used as primers for DNA polymerase during DNA replication. Also part of the exosome, which is a complex involved in RNA degradation. Acts as a poly(A)-binding protein that enhances the interaction between heteromeric, adenine-rich transcripts and the exosome. The chain is DNA primase DnaG from Methanobrevibacter smithii (strain ATCC 35061 / DSM 861 / OCM 144 / PS).